The sequence spans 234 residues: Cytochrome b (234 aa).

A run of 4 helical transmembrane segments spans residues 33–53 (FGSL…FLAM), 77–98 (WLIR…YMHV), 113–133 (WNIG…GYVL), and 178–198 (FFAF…IHLL). The heme b site is built by H83 and H97. Positions 182 and 196 each coordinate heme b. H201 lines the a ubiquinone pocket. A helical transmembrane segment spans residues 226–234 (IKDLLGFLV).

Belongs to the cytochrome b family. As to quaternary structure, the cytochrome bc1 complex contains 11 subunits: 3 respiratory subunits (MT-CYB, CYC1 and UQCRFS1), 2 core proteins (UQCRC1 and UQCRC2) and 6 low-molecular weight proteins (UQCRH/QCR6, UQCRB/QCR7, UQCRQ/QCR8, UQCR10/QCR9, UQCR11/QCR10 and a cleavage product of UQCRFS1). This cytochrome bc1 complex then forms a dimer. Heme b is required as a cofactor.

The protein localises to the mitochondrion inner membrane. Its function is as follows. Component of the ubiquinol-cytochrome c reductase complex (complex III or cytochrome b-c1 complex) that is part of the mitochondrial respiratory chain. The b-c1 complex mediates electron transfer from ubiquinol to cytochrome c. Contributes to the generation of a proton gradient across the mitochondrial membrane that is then used for ATP synthesis. The sequence is that of Cytochrome b (MT-CYB) from Lepus arcticus (Arctic hare).